A 256-amino-acid polypeptide reads, in one-letter code: MATRRYSFGRTDEATHPDSMRASLAEFASTFIFVFAGEGSGLALVKIYQDSAFSAGELLALALAHAFALFAAVSASMHVSGGHVNPAVSFGALIGGRISVIRAVYYWIAQLLGSIVAALVLRLVTNNMRPSGFHVSPGVGVGHMFILEVVMTFGLMYTVYGTAIDPKRGAVSYIAPLAIGLIVGANILVGGPFDGACMNPALAFGPSLVGWQWHQHWIFWVGPLLGAALAALVYEYAVIPIEPPPHHHQPLATEDY.

Topologically, residues 1 to 24 (MATRRYSFGRTDEATHPDSMRASL) are cytoplasmic. Serine 7 carries the phosphoserine; by CPK modification. Residues 25-44 (AEFASTFIFVFAGEGSGLAL) traverse the membrane as a helical segment. At 45–57 (VKIYQDSAFSAGE) the chain is on the vacuolar side. The chain crosses the membrane as a helical span at residues 58-77 (LLALALAHAFALFAAVSASM). At 78-102 (HVSGGHVNPAVSFGALIGGRISVIR) the chain is on the cytoplasmic side. Positions 85–87 (NPA) match the NPA 1 motif. A helical transmembrane segment spans residues 103 to 121 (AVYYWIAQLLGSIVAALVL). The Vacuolar portion of the chain corresponds to 122 to 143 (RLVTNNMRPSGFHVSPGVGVGH). Residues 144–164 (MFILEVVMTFGLMYTVYGTAI) form a helical membrane-spanning segment. At 165–169 (DPKRG) the chain is on the cytoplasmic side. The helical transmembrane segment at 170-189 (AVSYIAPLAIGLIVGANILV) threads the bilayer. Topologically, residues 190–216 (GGPFDGACMNPALAFGPSLVGWQWHQH) are vacuolar. The NPA 2 signature appears at 199–201 (NPA). A helical membrane pass occupies residues 217–239 (WIFWVGPLLGAALAALVYEYAVI). The Cytoplasmic segment spans residues 240–256 (PIEPPPHHHQPLATEDY).

It belongs to the MIP/aquaporin (TC 1.A.8) family. TIP (TC 1.A.8.10) subfamily. Phosphorylated by a tonoplast-bound calcium-dependent protein kinase. In terms of tissue distribution, found in all seed tissues that are alive at seed maturity, but not in tissues that lose viability during seed maturation.

Its subcellular location is the vacuole membrane. Functionally, channel protein in tonoplast. These proteins may allow the diffusion of amino acids and/or peptides from the vacuolar compartment to the cytoplasm. This chain is Probable aquaporin TIP-type alpha, found in Phaseolus vulgaris (Kidney bean).